We begin with the raw amino-acid sequence, 685 residues long: Probable serine/threonine-protein kinase CPE1738 (685 aa).

The region spanning 10–275 (YELLQCVGEG…LEKIKKDPNV (266 aa)) is the Protein kinase domain. ATP contacts are provided by residues 16–24 (VGEGGMSFV) and lysine 39. Glutamate 143 functions as the Proton acceptor in the catalytic mechanism. The interval 277-339 (ISSKSAEDED…NIQTKPQKAI (63 aa)) is disordered. Positions 306–329 (EPDEDDEDDDEYYEDDEDEDEEEN) are enriched in acidic residues. PASTA domains follow at residues 376–440 (GKDV…TVSG), 441–508 (GEGQ…TISK), 513–581 (KSET…TINY), and 589–648 (EKPK…TMEE). Positions 480 to 500 (VPRGEVISQSPNANESVDKGS) are disordered. The disordered stretch occupies residues 623 to 685 (DTAKVKSVSN…PKQPEQSGNN (63 aa)). 2 stretches are compositionally biased toward low complexity: residues 627–645 (VKSV…VSVT) and 654–685 (QPTQ…SGNN).

Belongs to the protein kinase superfamily. Ser/Thr protein kinase family.

It catalyses the reaction L-seryl-[protein] + ATP = O-phospho-L-seryl-[protein] + ADP + H(+). The catalysed reaction is L-threonyl-[protein] + ATP = O-phospho-L-threonyl-[protein] + ADP + H(+). In Clostridium perfringens (strain 13 / Type A), this protein is Probable serine/threonine-protein kinase CPE1738.